The primary structure comprises 451 residues: Interferon regulatory factor 4 (451 aa).

Residues 21–129 constitute a DNA-binding region (IRF tryptophan pentad repeat); sequence NGKLRQWLID…DPYKVYRIVP (109 aa). A phosphoserine; by ROCK2 mark is found at Ser447 and Ser448.

This sequence belongs to the IRF family. Interacts with the BATF-JUNB heterodimer. Interacts with BATF (via bZIP domain); the interaction is direct. Interacts with SPIB. Interacts with DEF6. Directly interacts with NLRP3 in the nucleus of Th2 cells; this interaction enhances IRF4 ability to bind to the IL4 promoter and is required for optimal IRF4-dependent IL4 transcription. Interacts with SPI1. Post-translationally, phosphorylation by ROCK2 regulates IL-17 and IL-21 production. As to expression, lymphoid cells.

It localises to the nucleus. The protein localises to the cytoplasm. Its function is as follows. Transcriptional activator. Binds to the interferon-stimulated response element (ISRE) of the MHC class I promoter. Binds the immunoglobulin lambda light chain enhancer, together with PU.1. Probably plays a role in ISRE-targeted signal transduction mechanisms specific to lymphoid cells. Involved in CD8(+) dendritic cell differentiation by forming a complex with the BATF-JUNB heterodimer in immune cells, leading to recognition of AICE sequence (5'-TGAnTCA/GAAA-3'), an immune-specific regulatory element, followed by cooperative binding of BATF and IRF4 and activation of genes. In Homo sapiens (Human), this protein is Interferon regulatory factor 4.